The primary structure comprises 650 residues: Probable acyl-CoA dehydrogenase FadE10 (650 aa).

The tract at residues 1–23 is disordered; sequence MAQQTQVTEEQARALAEESRESG. Residues 10 to 23 show a composition bias toward basic and acidic residues; the sequence is EQARALAEESRESG. The active-site Proton acceptor is the Glu422.

This sequence belongs to the acyl-CoA dehydrogenase family. FAD is required as a cofactor.

It carries out the reaction a 2,3-saturated acyl-CoA + A = a 2,3-dehydroacyl-CoA + AH2. The sequence is that of Probable acyl-CoA dehydrogenase FadE10 (fadE10) from Mycobacterium tuberculosis (strain CDC 1551 / Oshkosh).